The chain runs to 238 residues: Cysteine-rich venom protein (238 aa).

The N-terminal stretch at 1–19 (MIAFIVLLSLAAVLQQSSG) is a signal peptide. An SCP domain is found at 38–164 (VDKHNALRRS…STKYLYVCQY (127 aa)). Disulfide bonds link Cys-75–Cys-153, Cys-92–Cys-165, Cys-148–Cys-162, Cys-184–Cys-191, Cys-187–Cys-196, Cys-200–Cys-233, Cys-209–Cys-227, and Cys-218–Cys-231. Residues 200–233 (CKYEDAFTNCKALAKKTKCKTEWIKSKCPATCFC) form the ShKT domain.

This sequence belongs to the CRISP family. In terms of tissue distribution, expressed by the venom gland.

It is found in the secreted. Blocks contraction of smooth muscle elicited by high potassium-induced depolarization, but does not block caffeine-stimulated contraction. May target voltage-gated calcium channels on smooth muscle. This Austrelaps superbus (Lowland copperhead snake) protein is Cysteine-rich venom protein.